The following is a 345-amino-acid chain: MADFWATSLGQTLILLAQGLGIIAFVMIGLLLLVWGDRKIWAAVQMRKGPNVVGAFGLLQSVADAAKYVFKEIVVPAGVDKPVYFLAPMLSLVLALLAWVVVPFNEGWVMADINVAVLFVFAVSSLEVYGVIMGGWASNSKYPFLGSLRSAAQMISYEVSMGLIIVGVIISTGSMNLSAIVEAQRGDFGLLNWYWLPHLPMVALFFISALAETNRPPFDLPEAESELVAGFMVEYSSTPYLLFMAGEYIAVWLMCALTSVLFFGGWLSPIPGVPDGVLWMVAKMAAVFFVFAMVKAIVPRYRYDQLMRIGWKVFLPLSLAWVVVVAFLAKFEVLGGFWARWSIGA.

The Lumenal segment spans residues 1 to 15 (MADFWATSLGQTLIL). Residues 16–35 (LAQGLGIIAFVMIGLLLLVW) form a helical membrane-spanning segment. Residues 36–86 (GDRKIWAAVQMRKGPNVVGAFGLLQSVADAAKYVFKEIVVPAGVDKPVYFL) lie on the Cytoplasmic side of the membrane. The helical transmembrane segment at 87–106 (APMLSLVLALLAWVVVPFNE) threads the bilayer. The Lumenal segment spans residues 107 to 110 (GWVM). A helical membrane pass occupies residues 111–130 (ADINVAVLFVFAVSSLEVYG). Residues 131–156 (VIMGGWASNSKYPFLGSLRSAAQMIS) lie on the Cytoplasmic side of the membrane. The chain crosses the membrane as a helical span at residues 157–176 (YEVSMGLIIVGVIISTGSMN). Topologically, residues 177 to 191 (LSAIVEAQRGDFGLL) are lumenal. A helical membrane pass occupies residues 192 to 211 (NWYWLPHLPMVALFFISALA). Residues 212-245 (ETNRPPFDLPEAESELVAGFMVEYSSTPYLLFMA) lie on the Cytoplasmic side of the membrane. A helical membrane pass occupies residues 246–265 (GEYIAVWLMCALTSVLFFGG). Residues 266-276 (WLSPIPGVPDG) lie on the Lumenal side of the membrane. Residues 277 to 296 (VLWMVAKMAAVFFVFAMVKA) form a helical membrane-spanning segment. Over 297 to 313 (IVPRYRYDQLMRIGWKV) the chain is Cytoplasmic. Residues 314-333 (FLPLSLAWVVVVAFLAKFEV) traverse the membrane as a helical segment. Over 334 to 345 (LGGFWARWSIGA) the chain is Lumenal.

It belongs to the complex I subunit 1 family. In terms of assembly, NDH-1 is composed of 14 different subunits. Subunits NuoA, H, J, K, L, M, N constitute the membrane sector of the complex.

Its subcellular location is the cellular chromatophore membrane. It catalyses the reaction a quinone + NADH + 5 H(+)(in) = a quinol + NAD(+) + 4 H(+)(out). NDH-1 shuttles electrons from NADH, via FMN and iron-sulfur (Fe-S) centers, to quinones in the respiratory chain. The immediate electron acceptor for the enzyme in this species is believed to be ubiquinone. Couples the redox reaction to proton translocation (for every two electrons transferred, four hydrogen ions are translocated across the cytoplasmic membrane), and thus conserves the redox energy in a proton gradient. This subunit may bind ubiquinone. This is NADH-quinone oxidoreductase subunit H from Rhodobacter capsulatus (Rhodopseudomonas capsulata).